The primary structure comprises 116 residues: uncharacterized protein (116 aa).

Residues 20–42 (YLNKYYSVITYFLAFLTKFAILL) form a helical membrane-spanning segment. The segment at 95–116 (IEFQSKSSPVPPASESNKGINE) is disordered.

The protein resides in the membrane. This is an uncharacterized protein from Saccharomyces cerevisiae (strain ATCC 204508 / S288c) (Baker's yeast).